We begin with the raw amino-acid sequence, 484 residues long: Calcium-dependent protein kinase 31 (484 aa).

A lipid anchor (N-myristoyl glycine) is attached at Gly2. One can recognise a Protein kinase domain in the interval 28–290 (YILGDELGQG…AAEVLGHPWM (263 aa)). ATP contacts are provided by residues 34 to 42 (LGQGQFGIT) and Lys57. Asp156 functions as the Proton acceptor in the catalytic mechanism. The residue at position 196 (Ser196) is a Phosphoserine. Residues 295–325 (ASDKPIDGVVLSRLKQFRDMNKLKKVALKVI) are autoinhibitory domain. 4 consecutive EF-hand domains span residues 332 to 367 (EEIK…LGSN), 368 to 403 (LSKT…RYRL), 404 to 439 (DRDD…HGVG), and 444 to 474 (IKQI…GSSL). Ca(2+)-binding residues include Asp345, Asp347, Ser349, Thr351, Glu356, Asp381, Asp383, Asn385, Thr387, Glu392, Asp417, Asp419, Asp421, His423, Glu428, Asp452, Asp454, Asp456, Lys458, and Glu463.

This sequence belongs to the protein kinase superfamily. Ser/Thr protein kinase family. CDPK subfamily.

It is found in the membrane. It catalyses the reaction L-seryl-[protein] + ATP = O-phospho-L-seryl-[protein] + ADP + H(+). The enzyme catalyses L-threonyl-[protein] + ATP = O-phospho-L-threonyl-[protein] + ADP + H(+). Activated by calcium. Autophosphorylation may play an important role in the regulation of the kinase activity. In terms of biological role, may play a role in signal transduction pathways that involve calcium as a second messenger. The polypeptide is Calcium-dependent protein kinase 31 (CPK31) (Arabidopsis thaliana (Mouse-ear cress)).